The following is a 513-amino-acid chain: Putative ribose/galactose/methyl galactoside import ATP-binding protein 2 (513 aa).

2 consecutive ABC transporter domains span residues 24-260 (LSAE…VGRE) and 270-510 (VPIG…VMEL). 56 to 63 (GENGAGKS) lines the ATP pocket.

It belongs to the ABC transporter superfamily. Carbohydrate importer 2 (CUT2) (TC 3.A.1.2) family.

It is found in the cell inner membrane. The enzyme catalyses D-ribose(out) + ATP + H2O = D-ribose(in) + ADP + phosphate + H(+). The catalysed reaction is D-galactose(out) + ATP + H2O = D-galactose(in) + ADP + phosphate + H(+). Its function is as follows. Part of an ABC transporter complex involved in carbohydrate import. Could be involved in ribose, galactose and/or methyl galactoside import. Responsible for energy coupling to the transport system. The chain is Putative ribose/galactose/methyl galactoside import ATP-binding protein 2 from Rhizobium etli (strain ATCC 51251 / DSM 11541 / JCM 21823 / NBRC 15573 / CFN 42).